We begin with the raw amino-acid sequence, 183 residues long: Akirin-1B (183 aa).

The disordered stretch occupies residues 14–43 (EALMSPQSPKRRRCAPLPGSPATPSPQRCG). An SYVS motif motif is present at residues 180 to 183 (SYVS).

This sequence belongs to the akirin family.

The protein localises to the nucleus. Functionally, molecular adapter that acts as a bridge between proteins, and which is involved skeletal muscle development. Functions as a signal transducer for MSTN during skeletal muscle regeneration and myogenesis. This chain is Akirin-1B (akirin1-b), found in Xenopus laevis (African clawed frog).